The sequence spans 128 residues: Anti-sigma-F factor antagonist RsfA (128 aa).

One can recognise an STAS domain in the interval 17–128 (LKATIQHHDS…PTTESALSAT (112 aa)). The cysteines at positions 73 and 109 are disulfide-linked.

Belongs to the anti-sigma-factor antagonist family. Monomer. Interacts with anti-sigma-F factor RsbW (UsfX).

Positive, redox-sensitive regulator of sigma-F (SigF) activity. When reduced binds to anti-sigma-F factor RsbW (UsfX) preventing its binding to SigF, thus activating transcription. The chain is Anti-sigma-F factor antagonist RsfA (rsfA) from Mycobacterium tuberculosis (strain CDC 1551 / Oshkosh).